The chain runs to 121 residues: Large ribosomal subunit protein uL22 (121 aa).

It belongs to the universal ribosomal protein uL22 family. As to quaternary structure, part of the 50S ribosomal subunit.

Functionally, this protein binds specifically to 23S rRNA; its binding is stimulated by other ribosomal proteins, e.g. L4, L17, and L20. It is important during the early stages of 50S assembly. It makes multiple contacts with different domains of the 23S rRNA in the assembled 50S subunit and ribosome. The globular domain of the protein is located near the polypeptide exit tunnel on the outside of the subunit, while an extended beta-hairpin is found that lines the wall of the exit tunnel in the center of the 70S ribosome. The sequence is that of Large ribosomal subunit protein uL22 from Hydrogenobaculum sp. (strain Y04AAS1).